A 145-amino-acid polypeptide reads, in one-letter code: MLDVGMTELLCFAIIAILVLGPEKLPEAARFAGRWYVRLKRYITNLQNEIDQELRLSEFRKEMQEELNRIEALERKVQQQLDEIQKQQVSESLEVTETAKTTQKPIWKCTPISGHYKVPYLTKVTSLAAQTDISETSPVELKIAV.

Residues 1 to 21 (MLDVGMTELLCFAIIAILVLG) traverse the membrane as a helical segment.

Belongs to the TatB family. As to quaternary structure, the Tat system comprises two distinct complexes: a TatABC complex, containing multiple copies of TatA, TatB and TatC subunits, and a separate TatA complex, containing only TatA subunits. Substrates initially bind to the TatABC complex, which probably triggers association of the separate TatA complex to form the active translocon.

It localises to the cell inner membrane. Its function is as follows. Part of the twin-arginine translocation (Tat) system that transports large folded proteins containing a characteristic twin-arginine motif in their signal peptide across membranes. Together with TatC, TatB is part of a receptor directly interacting with Tat signal peptides. TatB may form an oligomeric binding site that transiently accommodates folded Tat precursor proteins before their translocation. This Acinetobacter baumannii (strain ATCC 17978 / DSM 105126 / CIP 53.77 / LMG 1025 / NCDC KC755 / 5377) protein is Sec-independent protein translocase protein TatB.